Consider the following 229-residue polypeptide: Urease accessory protein UreF (229 aa).

Belongs to the UreF family. In terms of assembly, ureD, UreF and UreG form a complex that acts as a GTP-hydrolysis-dependent molecular chaperone, activating the urease apoprotein by helping to assemble the nickel containing metallocenter of UreC. The UreE protein probably delivers the nickel.

The protein resides in the cytoplasm. Functionally, required for maturation of urease via the functional incorporation of the urease nickel metallocenter. In Alcanivorax borkumensis (strain ATCC 700651 / DSM 11573 / NCIMB 13689 / SK2), this protein is Urease accessory protein UreF.